The following is a 303-amino-acid chain: Ribonuclease HIII (303 aa).

Positions 89–303 (WSVLGSDEVG…ANTKKAERLL (215 aa)) constitute an RNase H type-2 domain. Positions 95, 96, and 199 each coordinate a divalent metal cation.

The protein belongs to the RNase HII family. RnhC subfamily. It depends on Mn(2+) as a cofactor. Mg(2+) is required as a cofactor.

Its subcellular location is the cytoplasm. It catalyses the reaction Endonucleolytic cleavage to 5'-phosphomonoester.. Functionally, endonuclease that specifically degrades the RNA of RNA-DNA hybrids. The sequence is that of Ribonuclease HIII from Leuconostoc mesenteroides subsp. mesenteroides (strain ATCC 8293 / DSM 20343 / BCRC 11652 / CCM 1803 / JCM 6124 / NCDO 523 / NBRC 100496 / NCIMB 8023 / NCTC 12954 / NRRL B-1118 / 37Y).